A 92-amino-acid chain; its full sequence is Small ribosomal subunit protein uS19 (92 aa).

The protein belongs to the universal ribosomal protein uS19 family.

Protein S19 forms a complex with S13 that binds strongly to the 16S ribosomal RNA. The polypeptide is Small ribosomal subunit protein uS19 (Thermobifida fusca (strain YX)).